Consider the following 63-residue polypeptide: Rubredoxin-2 (63 aa).

Residues 8–59 (YKLFRCLQCGFEYDEAIGWPDDGIEPGTRWDEIPEDWSCPDCGAAKVDFEMV) enclose the Rubredoxin-like domain. Fe cation-binding residues include Cys13, Cys16, Cys46, and Cys49.

The protein belongs to the rubredoxin family. Requires Fe(3+) as cofactor.

Its function is as follows. Involved in the hydrocarbon hydroxylating system, which transfers electrons from NADH to rubredoxin reductase and then through rubredoxin to alkane 1 monooxygenase. This chain is Rubredoxin-2 (rubA2), found in Rhodococcus erythropolis (Arthrobacter picolinophilus).